We begin with the raw amino-acid sequence, 97 residues long: Aspartyl/glutamyl-tRNA(Asn/Gln) amidotransferase subunit C (97 aa).

Belongs to the GatC family. Heterotrimer of A, B and C subunits.

It catalyses the reaction L-glutamyl-tRNA(Gln) + L-glutamine + ATP + H2O = L-glutaminyl-tRNA(Gln) + L-glutamate + ADP + phosphate + H(+). The enzyme catalyses L-aspartyl-tRNA(Asn) + L-glutamine + ATP + H2O = L-asparaginyl-tRNA(Asn) + L-glutamate + ADP + phosphate + 2 H(+). Its function is as follows. Allows the formation of correctly charged Asn-tRNA(Asn) or Gln-tRNA(Gln) through the transamidation of misacylated Asp-tRNA(Asn) or Glu-tRNA(Gln) in organisms which lack either or both of asparaginyl-tRNA or glutaminyl-tRNA synthetases. The reaction takes place in the presence of glutamine and ATP through an activated phospho-Asp-tRNA(Asn) or phospho-Glu-tRNA(Gln). The sequence is that of Aspartyl/glutamyl-tRNA(Asn/Gln) amidotransferase subunit C from Anaeromyxobacter dehalogenans (strain 2CP-C).